The primary structure comprises 436 residues: Lactonohydrolase oryL (436 aa).

An N-terminal signal peptide occupies residues 1–27 (MLSYTSHCLQALLGVASLPYRQYQAYS).

This sequence belongs to the SMP-30/CGR1 family.

It functions in the pathway secondary metabolite biosynthesis. Functionally, lactonohydrolase; part of the gene cluster that mediates the biosynthesis of oryzines, natural products with an unusual maleidride backbone. The two subunits of the fungal fatty acid synthase oryfasA and oryfasB probably form octenoic acid. This fatty acid is most likely activated by the acyl-CoA ligase oryP to give octenyl-CoA before the citrate synthase-like protein oryE catalyzes condensation with oxaloacetate to form tricarboxylic acid. The next steps of the pathways are conjectural, but a favorite possible route has been proposed, beginning with decarboxylation and concomitant dehydration by the decarboxylase oryM, followed by tautomerization, which may lead to the production of a diene intermediate. Reduction of this diene intermediate could give the known metabolite piliformic acid. On the pathway to oryzine B and oryzine A, however, hydroxylation of the diene by the alpha-ketoglutarate-dependent dioxygenase oryG and lactonisation by the lactonohydrolases oryH or oryL could give oryzine B directly. Finally, enoyl reduction by the dehydrogenase oryD would then convert oryzine B into oryzine A. This is Lactonohydrolase oryL from Aspergillus oryzae (strain ATCC 42149 / RIB 40) (Yellow koji mold).